We begin with the raw amino-acid sequence, 1507 residues long: Histone-lysine N-methyltransferase set-2 (1507 aa).

Residues 1–32 form a disordered region; the sequence is MSTHDMNHHPPRKSHSKRDKPSSSNSGPKIEN. The span at 9-18 shows a compositional bias: basic residues; sequence HPPRKSHSKR. An RRM domain is found at 128 to 199; the sequence is VSLFNMDDNC…QNLLATKCTP (72 aa). Disordered stretches follow at residues 280–578, 650–697, 803–826, 842–1058, and 1163–1199; these read DYTM…QPQM, EPFS…EEPA, DEEKRKKEREEKARQEAEKPSNHL, SSRG…GPII, and QKPRKQVFEKDPYEYYEPPPTKRPAPPPRFKKTFKPR. Pro residues predominate over residues 296–315; it reads PIPPPPIKEESPPPPPPPPV. Over residues 316 to 327 the composition is skewed to low complexity; it reads ASVSNLAPVPSV. Residues 331-342 show a composition bias toward polar residues; it reads YYNNIQPSSSTM. The segment covering 413–444 has biased composition (basic and acidic residues); that stretch reads VKYETYKMEKRKIKYEGGNKKYEQVHIKERTA. Over residues 456–465 the composition is skewed to low complexity; it reads SSESASGSSS. Residues 478–488 are compositionally biased toward basic residues; that stretch reads KKKKRPKSPNR. A compositionally biased stretch (polar residues) spans 566-575; sequence HLQTPYQHVQ. 2 stretches are compositionally biased toward basic and acidic residues: residues 668–680 and 803–823; these read DVGRAESPEKPSL and DEEKRKKEREEKARQEAEKPS. Residues 846–868 are compositionally biased toward basic residues; the sequence is FYRKQKPIPKSHPKHQEHHHHAK. Residues 869 to 908 show a composition bias toward low complexity; the sequence is ASVSTPVHSSSTSRNSSVAPTPQRTVSTSSSSSSAATSAR. Positions 941–951 are enriched in polar residues; the sequence is SFSSTSIQSSP. The segment covering 958–971 has biased composition (low complexity); it reads SSSSRTSSSSSTSS. The span at 973–982 shows a compositional bias: basic and acidic residues; it reads KQEETADEKS. A compositionally biased stretch (low complexity) spans 990 to 1007; the sequence is SSDESSTTGSTATSVVSS. Over residues 1015–1047 the composition is skewed to basic and acidic residues; it reads QQEKTDGEPPKKKSQTDFISERVSKIEGEERPL. Residues 1179 to 1190 are compositionally biased toward pro residues; it reads EPPPTKRPAPPP. Residues 1340 to 1345 carry the RxxxRR motif motif; the sequence is RLLQRR. Positions 1368-1485 constitute an SET domain; it reads KMIKFARSRI…KGEEITYDYK (118 aa). Position 1484 (tyrosine 1484) interacts with S-adenosyl-L-methionine. The Post-SET domain maps to 1491–1507; the sequence is DKIDCLCGAKTCRGYLN.

The protein belongs to the class V-like SAM-binding methyltransferase superfamily. Component of the Set1C/COMPASS complex (also known as the SET2 complex), which contains at least set-2, swd-2.1, cfp-1, rbbp-5, wdr-5.1, dpy-30 and ash-2. As to expression, expressed in all cells of embryo. In L1 larva, it is predominantly expressed in Z2 and Z3 primordial germ cells. In adults, it is predominantly expressed in the germline.

The protein localises to the nucleus. It catalyses the reaction L-lysyl(4)-[histone H3] + 3 S-adenosyl-L-methionine = N(6),N(6),N(6)-trimethyl-L-lysyl(4)-[histone H3] + 3 S-adenosyl-L-homocysteine + 3 H(+). The catalysed reaction is N(6)-methyl-L-lysyl(4)-[histone H3] + S-adenosyl-L-methionine = N(6),N(6)-dimethyl-L-lysyl(4)-[histone H3] + S-adenosyl-L-homocysteine + H(+). It carries out the reaction N(6),N(6)-dimethyl-L-lysyl(4)-[histone H3] + S-adenosyl-L-methionine = N(6),N(6),N(6)-trimethyl-L-lysyl(4)-[histone H3] + S-adenosyl-L-homocysteine + H(+). Functionally, catalytic component of the COMPASS (Set1C) complex that specifically mono-, di- and trimethylates histone H3 to form H3K4me1/2/3. Binds RNAs which might negatively affect its histone methyltransferase activity. COMPASS recognizes ubiquitinated H2B on one face of the nucleosome which stimulates the methylation of H3 on the opposing face. H3 'Lys-4' methylation represents a specific tag for epigenetic transcriptional activation. Implicated in the epigenetic inheritance of lifespan over several generations. Acts in the germline to limit the longevity of the soma, probably by regulating a lipid metabolism pathway that signals from the germline to the intestine, thereby preventing accumulation of mono-unsaturated fatty acids. Methylation in the germline is required for germline development and fertility, possibly by ensuring genome stability. May act redundantly with mes-3 and mes-4 proteins in the development of a fertile germline. Required for RNAi. Functions as an antagonist of hpl-1 and hpl-2 activity in growth and somatic gonad development. Cooperates with jmjd-3.1 and egl-27 to ensure robust transdifferentiation of the Y rectal cell to the PDA motor neuron during larval development. In Caenorhabditis elegans, this protein is Histone-lysine N-methyltransferase set-2 (set-2).